We begin with the raw amino-acid sequence, 369 residues long: Putative 2-aminoethylphosphonate import ATP-binding protein PhnT (369 aa).

In terms of domain architecture, ABC transporter spans 19 to 250; it reads IVLDSLRVAY…PPNRFASEFL (232 aa). 51-58 contacts ATP; it reads GPSGSGKT.

Belongs to the ABC transporter superfamily. 2-aminoethylphosphonate importer (TC 3.A.1.11.5) family.

Its subcellular location is the cell inner membrane. Its function is as follows. Probably part of the PhnSTUV complex (TC 3.A.1.11.5) involved in 2-aminoethylphosphonate import. Probably responsible for energy coupling to the transport system. The polypeptide is Putative 2-aminoethylphosphonate import ATP-binding protein PhnT (phnT) (Salmonella choleraesuis (strain SC-B67)).